A 74-amino-acid chain; its full sequence is Bacteriocin hiracin-JM79 (74 aa).

Positions 1–30 (MKKKVLKHCVILGILGTCLAGIGTGIKVDA) are cleaved as a signal peptide.

The protein resides in the secreted. In terms of biological role, bacteriocin with antibacterial activity against the Gram-positive Listeria, Enterococcus, Propionibacterium, Staphylococcus and some strains of Clostridium, Lactobacillus and Pediococcus. Lacks antibacterial activity against Gram-negative bacteria. The protein is Bacteriocin hiracin-JM79 of Enterococcus hirae.